We begin with the raw amino-acid sequence, 213 residues long: dITP/XTP pyrophosphatase (213 aa).

Substrate is bound at residue 17 to 22; that stretch reads SNNAGK. Mg(2+) contacts are provided by Glu49 and Asp78. The active-site Proton acceptor is the Asp78. Substrate contacts are provided by residues Ser79, 164–167, Lys187, and 192–193; these read FGYD and HR.

Belongs to the HAM1 NTPase family. In terms of assembly, homodimer. Requires Mg(2+) as cofactor.

It carries out the reaction XTP + H2O = XMP + diphosphate + H(+). It catalyses the reaction dITP + H2O = dIMP + diphosphate + H(+). The catalysed reaction is ITP + H2O = IMP + diphosphate + H(+). In terms of biological role, pyrophosphatase that catalyzes the hydrolysis of nucleoside triphosphates to their monophosphate derivatives, with a high preference for the non-canonical purine nucleotides XTP (xanthosine triphosphate), dITP (deoxyinosine triphosphate) and ITP. Seems to function as a house-cleaning enzyme that removes non-canonical purine nucleotides from the nucleotide pool, thus preventing their incorporation into DNA/RNA and avoiding chromosomal lesions. This Bordetella bronchiseptica (strain ATCC BAA-588 / NCTC 13252 / RB50) (Alcaligenes bronchisepticus) protein is dITP/XTP pyrophosphatase.